Reading from the N-terminus, the 101-residue chain is Small ribosomal subunit protein uS14 (101 aa).

It belongs to the universal ribosomal protein uS14 family. Part of the 30S ribosomal subunit. Contacts proteins S3 and S10.

Binds 16S rRNA, required for the assembly of 30S particles and may also be responsible for determining the conformation of the 16S rRNA at the A site. The protein is Small ribosomal subunit protein uS14 of Hyphomonas neptunium (strain ATCC 15444).